The sequence spans 140 residues: MGARRTGRERALQALYQLEMATATTAEALESAWSAAEESNKRDPDAVKFARELVEGVQSHRDEIDQLIERHSHNWRLDRMSRIDRNVLRLGIFELKYRPDIPRKVSINEAVELGKNFGNEESSAFVNGLLDRVAVALNKP.

This sequence belongs to the NusB family.

In terms of biological role, involved in transcription antitermination. Required for transcription of ribosomal RNA (rRNA) genes. Binds specifically to the boxA antiterminator sequence of the ribosomal RNA (rrn) operons. The polypeptide is Transcription antitermination protein NusB (Myxococcus xanthus (strain DK1622)).